We begin with the raw amino-acid sequence, 735 residues long: Ion-translocating oxidoreductase complex subunit C (735 aa).

4Fe-4S ferredoxin-type domains follow at residues 368-397 (MGAP…QQLY) and 407-436 (KATA…VQYF). Residues cysteine 377, cysteine 380, cysteine 383, cysteine 387, cysteine 416, cysteine 419, cysteine 422, and cysteine 426 each contribute to the [4Fe-4S] cluster site. The disordered stretch occupies residues 534-716 (QARAKQAAHP…ADPRKAAVAA (183 aa)).

It belongs to the 4Fe4S bacterial-type ferredoxin family. RnfC subfamily. In terms of assembly, the complex is composed of six subunits: RsxA, RsxB, RsxC, RsxD, RsxE and RsxG. The cofactor is [4Fe-4S] cluster.

It is found in the cell inner membrane. Functionally, part of a membrane-bound complex that couples electron transfer with translocation of ions across the membrane. Required to maintain the reduced state of SoxR. This is Ion-translocating oxidoreductase complex subunit C from Salmonella agona (strain SL483).